The following is a 216-amino-acid chain: MRDQILSLALLLCVLHSACGLYFHISETERKCFIEEVPDETTVIVNYKVELYDPRSNGFMPSSPGIGMHVEVRDSDDKVVLSRVYSSQGRISFTSHTPGEHIICMYSNSTAWFSGAQLRVHLDIQVGEHAIDYANVAQKEKLTELQLRIRQLLDQVEQITKEQNYQRYREERFRHTSESTNSRVLWWSLAQTVVLVCMGFWQMRHLKSFFEAKKLV.

The signal sequence occupies residues 1 to 20 (MRDQILSLALLLCVLHSACG). Topologically, residues 21-182 (LYFHISETER…FRHTSESTNS (162 aa)) are lumenal. The GOLD domain maps to 30 to 126 (RKCFIEEVPD…QLRVHLDIQV (97 aa)). The stretch at 134–164 (ANVAQKEKLTELQLRIRQLLDQVEQITKEQN) forms a coiled coil. A helical transmembrane segment spans residues 183 to 203 (RVLWWSLAQTVVLVCMGFWQM). The Cytoplasmic portion of the chain corresponds to 204-216 (RHLKSFFEAKKLV). The short motif at 213-216 (KKLV) is the Prevents secretion from ER element.

It belongs to the EMP24/GP25L family.

The protein resides in the endoplasmic reticulum membrane. Its function is as follows. Eca and bai are essential, though not redundant, for dorsoventral patterning of the embryo. Specifically required during early embryogenesis for the activity of maternal tkv, while the zygotic tkv is not affected. Involved in Golgi organization. The sequence is that of Transmembrane emp24 domain-containing protein eca from Drosophila ananassae (Fruit fly).